Consider the following 183-residue polypeptide: Ribosome-recycling factor (183 aa).

The protein belongs to the RRF family.

The protein resides in the cytoplasm. Its function is as follows. Responsible for the release of ribosomes from messenger RNA at the termination of protein biosynthesis. May increase the efficiency of translation by recycling ribosomes from one round of translation to another. This is Ribosome-recycling factor from Mycoplasma genitalium (strain ATCC 33530 / DSM 19775 / NCTC 10195 / G37) (Mycoplasmoides genitalium).